The primary structure comprises 500 residues: Cytochrome P450 2D26 (500 aa).

Ser249 carries the post-translational modification Phosphoserine. Cys446 provides a ligand contact to heme.

Belongs to the cytochrome P450 family. Requires heme as cofactor.

Its subcellular location is the endoplasmic reticulum membrane. It localises to the microsome membrane. The catalysed reaction is an organic molecule + reduced [NADPH--hemoprotein reductase] + O2 = an alcohol + oxidized [NADPH--hemoprotein reductase] + H2O + H(+). In terms of biological role, cytochromes P450 are a group of heme-thiolate monooxygenases. In liver microsomes, this enzyme is involved in an NADPH-dependent electron transport pathway. It oxidizes a variety of structurally unrelated compounds, including steroids, fatty acids, and xenobiotics. The sequence is that of Cytochrome P450 2D26 (Cyp2d26) from Rattus norvegicus (Rat).